Consider the following 226-residue polypeptide: Ornithine decarboxylase antizyme (226 aa).

It belongs to the ODC antizyme family. In terms of assembly, interacts with ODC and thereby sterically blocks ODC homodimerization.

Its function is as follows. Ornithine decarboxylase (ODC) antizyme protein that negatively regulates ODC activity and intracellular polyamine biosynthesis in response to increased intracellular polyamine levels. Binds to ODC monomers, inhibiting the assembly of the functional ODC homodimer, and targets the monomers for ubiquitin-independent proteolytic destruction by the 26S proteasome. This is Ornithine decarboxylase antizyme (spa1) from Schizosaccharomyces japonicus (Fission yeast).